We begin with the raw amino-acid sequence, 322 residues long: tRNA U34 carboxymethyltransferase (322 aa).

Residues Lys91, Trp105, Lys110, Gly129, 179-180 (LE), Met195, Tyr199, and Arg314 each bind carboxy-S-adenosyl-L-methionine.

This sequence belongs to the class I-like SAM-binding methyltransferase superfamily. CmoB family. Homotetramer.

It catalyses the reaction carboxy-S-adenosyl-L-methionine + 5-hydroxyuridine(34) in tRNA = 5-carboxymethoxyuridine(34) in tRNA + S-adenosyl-L-homocysteine + H(+). In terms of biological role, catalyzes carboxymethyl transfer from carboxy-S-adenosyl-L-methionine (Cx-SAM) to 5-hydroxyuridine (ho5U) to form 5-carboxymethoxyuridine (cmo5U) at position 34 in tRNAs. In Pseudomonas aeruginosa (strain ATCC 15692 / DSM 22644 / CIP 104116 / JCM 14847 / LMG 12228 / 1C / PRS 101 / PAO1), this protein is tRNA U34 carboxymethyltransferase.